The sequence spans 496 residues: NADP-dependent glyceraldehyde-3-phosphate dehydrogenase (496 aa).

Residues arginine 116 and 169-170 (NY) each bind substrate. Residues lysine 192, threonine 195, and aspartate 230 each contribute to the NADP(+) site. Position 245–249 (245–249 (GGDTG)) interacts with NAD(+). Glutamate 264 serves as the catalytic Proton acceptor. 297–299 (RCT) is a binding site for substrate. The active-site Nucleophile is the cysteine 298. Glutamate 391 contributes to the NADP(+) binding site. Arginine 451 contributes to the substrate binding site.

The protein belongs to the aldehyde dehydrogenase family.

It localises to the cytoplasm. The protein resides in the cytosol. The enzyme catalyses D-glyceraldehyde 3-phosphate + NADP(+) + H2O = (2R)-3-phosphoglycerate + NADPH + 2 H(+). With respect to regulation, competitive inhibition by NADPH, 3-phospho-D-glycerate and ATP. In terms of biological role, important as a means of generating NADPH for biosynthetic reactions. May be a main source of cytosolic NADPH for mannitol biosynthesis in leaves. In Apium graveolens (Celery), this protein is NADP-dependent glyceraldehyde-3-phosphate dehydrogenase.